Consider the following 324-residue polypeptide: MYG1 protein C694.04c (324 aa).

This sequence belongs to the MYG1 family.

This chain is MYG1 protein C694.04c, found in Schizosaccharomyces pombe (strain 972 / ATCC 24843) (Fission yeast).